We begin with the raw amino-acid sequence, 491 residues long: Synaptotagmin-9 (491 aa).

Residues Met1–Val52 lie on the Vesicular side of the membrane. The interval Cys9–Gln31 is cysteine motif. The chain crosses the membrane as a helical span at residues Ser53–Val73. Residues Ser74 to Arg491 are Cytoplasmic-facing. A compositionally biased stretch (polar residues) spans Ser91–Thr104. Residues Ser91 to Asn147 are disordered. Positions Glu105–Leu116 are enriched in acidic residues. Residues Met127–Gly144 are compositionally biased toward polar residues. Phosphoserine is present on Ser177. 2 C2 domains span residues Ala220 to Lys341 and Asp352 to His485. Asp251, Asp257, Asp309, Phe310, Asp311, Ser314, Asp317, Asp383, Asp389, Asp443, and Asp445 together coordinate Ca(2+).

This sequence belongs to the synaptotagmin family. In terms of assembly, homodimer; disulfide-linked via the cysteine motif. Can also form heterodimers with SYT3, SYT6, SYT7 and SYT10. Interacts with DNAJC5 and SNAP25, but not with HSC70. The interaction with DNAJC5 is stimulated tenfold in presence of calcium while the interaction with SNAP25 is inhibited. It depends on Ca(2+) as a cofactor.

The protein resides in the cytoplasmic vesicle. It localises to the secretory vesicle. The protein localises to the synaptic vesicle membrane. Its function is as follows. May be involved in Ca(2+)-dependent exocytosis of secretory vesicles through Ca(2+) and phospholipid binding to the C2 domain or may serve as Ca(2+) sensors in the process of vesicular trafficking and exocytosis. This is Synaptotagmin-9 (Syt9) from Mus musculus (Mouse).